We begin with the raw amino-acid sequence, 266 residues long: Type III pantothenate kinase (266 aa).

6–13 (DAGNTNIV) is a binding site for ATP. Residues Y100 and 107–110 (GADR) each bind substrate. The active-site Proton acceptor is the D109. D129 is a binding site for K(+). T132 provides a ligand contact to ATP. T184 serves as a coordination point for substrate.

Belongs to the type III pantothenate kinase family. As to quaternary structure, homodimer. NH4(+) serves as cofactor. K(+) is required as a cofactor.

Its subcellular location is the cytoplasm. It catalyses the reaction (R)-pantothenate + ATP = (R)-4'-phosphopantothenate + ADP + H(+). The protein operates within cofactor biosynthesis; coenzyme A biosynthesis; CoA from (R)-pantothenate: step 1/5. Its function is as follows. Catalyzes the phosphorylation of pantothenate (Pan), the first step in CoA biosynthesis. In Clostridium beijerinckii (strain ATCC 51743 / NCIMB 8052) (Clostridium acetobutylicum), this protein is Type III pantothenate kinase.